The following is a 100-amino-acid chain: uncharacterized protein (100 aa).

This is an uncharacterized protein from Acanthamoeba polyphaga mimivirus (APMV).